Reading from the N-terminus, the 1515-residue chain is DNA topoisomerase 2-binding protein 1 (1515 aa).

BRCT domains lie at 101-189 (VYNM…KYTD) and 195-284 (FKCP…IYKA). Thr-298 is modified (phosphothreonine). 3 consecutive BRCT domains span residues 353–443 (APED…SYIH), 551–636 (REEG…SNPL), and 644–741 (SGVT…HFLV). Residues 759–893 (VSSNPDLPAH…TDSHSASPQL (135 aa)) form an interaction with CIP2A region. Thr-782 bears the Phosphothreonine mark. The disordered stretch occupies residues 799 to 826 (SQQRGQDPTFPPVRQPLTKEPSLHLDTP). Position 851 is a phosphothreonine (Thr-851). 5 positions are modified to phosphoserine: Ser-862, Ser-863, Ser-866, Ser-888, and Ser-890. Residues 880–891 (SSRNTDSHSASP) are compositionally biased toward polar residues. Residues 880-901 (SSRNTDSHSASPQLKGAHLEEE) form a disordered region. Residues 902–993 (ETRKPLDSVV…KHLPESLYPH (92 aa)) enclose the BRCT 6 domain. A disordered region spans residues 1020–1055 (VSASKDDGPDHLSVEGNETNTMGTNDKESPLLNGSG). Residues 1023–1032 (SKDDGPDHLS) are compositionally biased toward basic and acidic residues. Thr-1064 carries the post-translational modification Phosphothreonine. Positions 1097 to 1116 (SRSSCNSASSTPDSARSVRS) are enriched in low complexity. Disordered stretches follow at residues 1097 to 1119 (SRSS…SGRS), 1203 to 1255 (VTQA…TQEE), and 1491 to 1515 (KKGG…PRVH). Over residues 1217 to 1229 (PPVAERPLIPEPQ) the composition is skewed to pro residues. One can recognise a BRCT 7 domain in the interval 1255–1347 (ETHRKVKKQY…RFVQEEDYEW (93 aa)). A Nuclear localization signal motif is present at residues 1510–1513 (KRPR).

It belongs to the TOPBP1 family. As to quaternary structure, interacts (via BRCT domains 1 and 2) with (phosphorylated) MDC1; promoting TOPBP1 recruitment to DNA damage sites during mitosis. Interacts (via BRCT domains 7 and 8) with (autophosphorylated) ATR; promoting activation of ATR. Interacts (via BRCT domains 7 and 8) with (phosphorylated) POLQ; specifically binds POLQ phosphorylated by PLK1, promoting POLQ recruitment to DNA damage sites. Interacts (via BRCT domains 1 and 2) with (phosphorylated) RAD9A. Interacts (via BRCT domain 2) with (phosphorylated) TP53BP1. Interacts (via BRCT domain 2) with (phosphorylated) HTATSF1. Interacts (via BRCT domains 7 and 8) with (phosphorylated) RAD51; promoting RAD51 recruitment to damaged chromatin. Interacts with CIP2A; forming the CIP2A-TOPBP1 complex. Interacts with POLE. Interacts with UBR5. Interacts with E2F1. Interacts with PML. Interacts with SMARCA2. Interacts with SMARCA4. Interacts with RHNO1. May interact with TOP2B. Interacts with TICRR. Interacts with HELB. In terms of processing, phosphorylated on serine and threonine residues in response to X-ray irradiation. Ubiquitinated and degraded by the proteasome. X-ray irradiation reduces ubiquitination. Deubiquitinated by USP13; leading to TOPBP1 stabilizion and activation of the ATR-TOPBP1 axis pathway. In terms of tissue distribution, highly expressed in testis.

Its subcellular location is the nucleus. The protein localises to the chromosome. It localises to the cytoplasm. The protein resides in the cytoskeleton. It is found in the microtubule organizing center. Its subcellular location is the centrosome. The protein localises to the spindle pole. Its function is as follows. Scaffold protein that acts as a key protein-protein adapter in DNA replication and DNA repair. Composed of multiple BRCT domains, which specifically recognize and bind phosphorylated proteins, bringing proteins together into functional combinations. Required for DNA replication initiation but not for the formation of pre-replicative complexes or the elongation stages. Necessary for the loading of replication factors onto chromatin, including GMNC, CDC45, DNA polymerases and components of the GINS complex. Plays a central role in DNA repair by bridging proteins and promoting recruitment of proteins to DNA damage sites. Involved in double-strand break (DSB) repair via homologous recombination in S-phase by promoting the exchange between the DNA replication factor A (RPA) complex and RAD51. Mechanistically, TOPBP1 is recruited to DNA damage sites in S-phase via interaction with phosphorylated HTATSF1, and promotes the loading of RAD51, thereby facilitating RAD51 nucleofilaments formation and RPA displacement, followed by homologous recombination. Involved in microhomology-mediated end-joining (MMEJ) DNA repair by promoting recruitment of polymerase theta (POLQ) to DNA damage sites during mitosis. MMEJ is an alternative non-homologous end-joining (NHEJ) machinery that takes place during mitosis to repair DSBs in DNA that originate in S-phase. Recognizes and binds POLQ phosphorylated by PLK1, enabling its recruitment to DSBs for subsequent repair. Involved in G1 DNA damage checkpoint by acting as a molecular adapter that couples TP53BP1 and the 9-1-1 complex. In response to DNA damage, triggers the recruitment of checkpoint signaling proteins on chromatin, which activate the CHEK1 signaling pathway and block S-phase progression. Acts as an activator of the kinase activity of ATR. Also required for chromosomal stability when DSBs occur during mitosis by forming filamentous assemblies that bridge MDC1 and tether broken chromosomes during mitosis. Together with CIP2A, plays an essential role in the response to genome instability generated by the presence of acentric chromosome fragments derived from shattered chromosomes within micronuclei. Micronuclei, which are frequently found in cancer cells, consist of chromatin surrounded by their own nuclear membrane: following breakdown of the micronuclear envelope, a process associated with chromothripsis, the CIP2A-TOPBP1 complex tethers chromosome fragments during mitosis to ensure clustered segregation of the fragments to a single daughter cell nucleus, facilitating re-ligation with limited chromosome scattering and loss. Recruits the SWI/SNF chromatin remodeling complex to E2F1-responsive promoters, thereby down-regulating E2F1 activity and inhibiting E2F1-dependent apoptosis during G1/S transition and after DNA damage. The polypeptide is DNA topoisomerase 2-binding protein 1 (Mus musculus (Mouse)).